The sequence spans 324 residues: Methionyl-tRNA formyltransferase (324 aa).

114-117 serves as a coordination point for (6S)-5,6,7,8-tetrahydrofolate; that stretch reads SLLP.

This sequence belongs to the Fmt family.

The enzyme catalyses L-methionyl-tRNA(fMet) + (6R)-10-formyltetrahydrofolate = N-formyl-L-methionyl-tRNA(fMet) + (6S)-5,6,7,8-tetrahydrofolate + H(+). In terms of biological role, attaches a formyl group to the free amino group of methionyl-tRNA(fMet). The formyl group appears to play a dual role in the initiator identity of N-formylmethionyl-tRNA by promoting its recognition by IF2 and preventing the misappropriation of this tRNA by the elongation apparatus. This is Methionyl-tRNA formyltransferase from Phocaeicola vulgatus (strain ATCC 8482 / DSM 1447 / JCM 5826 / CCUG 4940 / NBRC 14291 / NCTC 11154) (Bacteroides vulgatus).